The following is a 256-amino-acid chain: Ubiquinone/menaquinone biosynthesis C-methyltransferase UbiE (256 aa).

Basic and acidic residues predominate over residues 1 to 12; the sequence is MNDQRKGDHAEP. The interval 1–23 is disordered; sequence MNDQRKGDHAEPTTHFGYQDVPE. S-adenosyl-L-methionine is bound by residues Thr79, Asp100, and 128 to 129; that span reads DA.

The protein belongs to the class I-like SAM-binding methyltransferase superfamily. MenG/UbiE family.

It carries out the reaction a 2-demethylmenaquinol + S-adenosyl-L-methionine = a menaquinol + S-adenosyl-L-homocysteine + H(+). The catalysed reaction is a 2-methoxy-6-(all-trans-polyprenyl)benzene-1,4-diol + S-adenosyl-L-methionine = a 5-methoxy-2-methyl-3-(all-trans-polyprenyl)benzene-1,4-diol + S-adenosyl-L-homocysteine + H(+). It functions in the pathway quinol/quinone metabolism; menaquinone biosynthesis; menaquinol from 1,4-dihydroxy-2-naphthoate: step 2/2. Its pathway is cofactor biosynthesis; ubiquinone biosynthesis. Functionally, methyltransferase required for the conversion of demethylmenaquinol (DMKH2) to menaquinol (MKH2) and the conversion of 2-polyprenyl-6-methoxy-1,4-benzoquinol (DDMQH2) to 2-polyprenyl-3-methyl-6-methoxy-1,4-benzoquinol (DMQH2). The polypeptide is Ubiquinone/menaquinone biosynthesis C-methyltransferase UbiE (Pseudomonas putida (strain GB-1)).